A 2496-amino-acid polypeptide reads, in one-letter code: Non-reducing polyketide synthase adrD (2496 aa).

Residues 15–254 (LVFGPQIAEI…HHASHITAVQ (240 aa)) form an N-terminal acylcarrier protein transacylase domain (SAT) region. The 422-residue stretch at 387–808 (ATPIAITGMG…GSNAALVVKQ (422 aa)) folds into the Ketosynthase family 3 (KS3) domain. Residues Cys-552, His-687, and His-726 each act as for beta-ketoacyl synthase activity in the active site. A malonyl-CoA:ACP transacylase (MAT) domain region spans residues 914–1223 (LCFGGQNGNE…QSLDLGGPQG (310 aa)). The active-site For acyl/malonyl transferase activity is the Ser-1001. Residues 1295–1423 (KEFVQLLTKQ…GEISLHPFGQ (129 aa)) are N-terminal hotdog fold. The PKS/mFAS DH domain occupies 1295–1602 (KEFVQLLTKQ…FTSVSIAGLA (308 aa)). Positions 1296–1601 (EFVQLLTKQP…EFTSVSIAGL (306 aa)) are product template (PT) domain. His-1326 acts as the Proton acceptor; for dehydratase activity in catalysis. Positions 1451-1602 (ESSGLKGFAV…FTSVSIAGLA (152 aa)) are C-terminal hotdog fold. Asp-1509 (proton donor; for dehydratase activity) is an active-site residue. Basic and acidic residues predominate over residues 1615 to 1629 (EKASPDLSLRNDSKV). Residues 1615–1645 (EKASPDLSLRNDSKVDVNPTPQNTAPVVQPT) form a disordered region. The span at 1633–1645 (PTPQNTAPVVQPT) shows a compositional bias: polar residues. Residues 1652-1726 (PGYFVVVQEM…ALVQTIFPDA (75 aa)) enclose the Carrier domain. An O-(pantetheine 4'-phosphoryl)serine modification is found at Ser-1686. Positions 1888–2121 (QHRSEHHLLK…GFQWVDWTHN (234 aa)) are methyltransferase (CMeT) domain. Positions 2151–2496 (RVMNEETVPY…YEFLRDHVRY (346 aa)) are thioesterase (TE) domain. Residues Ser-2274 and Asp-2433 each act as for thioesterase activity in the active site.

It catalyses the reaction 3 malonyl-CoA + acetyl-CoA + 2 S-adenosyl-L-methionine = 3,5-dimethylorsellinate + 2 S-adenosyl-L-homocysteine + 3 CO2 + 4 CoA. The protein operates within secondary metabolite biosynthesis; terpenoid biosynthesis. Its function is as follows. Non-reducing polyketide synthase; part of the gene cluster that mediates the biosynthesis of andrastins, meroterpenoid compounds that exhibit inhibitory activity against ras farnesyltransferase, suggesting that they could be promising leads for antitumor agents. The first step of the pathway is the synthesis of 3,5-dimethylorsellinic acid (DMOA) by the polyketide synthase adrD via condensation of one acetyl-CoA starter unit with 3 malonyl-CoA units and 2 methylations. DMAO is then converted to farnesyl-DMAO by the prenyltransferase adrG. The methyltransferase adrK catalyzes the methylation of the carboxyl group of farnesyl-DMAO to farnesyl-DMAO methyl ester which is further converted to epoxyfarnesyl-DMAO methyl ester by the FAD-dependent monooxygenase adrH. The terpene cyclase adrI then catalyzes the carbon skeletal rearrangement to generate the andrastin E, the first compound in the pathway having the andrastin scaffold, with the tetracyclic ring system. The post-cyclization tailoring enzymes adrF, adrE, adrJ, and adrA, are involved in the conversion of andrastin E into andrastin A. The short chain dehydrogenase adrF is responsible for the oxidation of the C-3 a hydroxyl group of andrastin E to yield the corresponding ketone, andrastin D. The ketoreductase adrE stereoselectively reduces the carbonyl moiety to reverse the stereochemistry of the C-3 position to yield andrastin F. The acetyltransferase adrJ is the acetyltransferase that attaches the acetyl group to the C-3 hydroxyl group of andrastin F to yield andrastin C. Finally, the cytochrome P450 monooxygenase adrA catalyzes two sequential oxidation reactions of the C-23 methyl group, to generate the corresponding alcohol andrastin B, and aldehyde andrastin A. The chain is Non-reducing polyketide synthase adrD from Penicillium rubens (strain ATCC 28089 / DSM 1075 / NRRL 1951 / Wisconsin 54-1255) (Penicillium chrysogenum).